Consider the following 185-residue polypeptide: Inner membrane-spanning protein YciB (185 aa).

5 helical membrane passes run 19-39 (LGGV…QIVI), 53-73 (IMAS…EIRY), 76-96 (WKVT…QFQF), 118-138 (TLNF…IYIS), and 149-169 (FKSF…GVYI).

Belongs to the YciB family.

It localises to the cell inner membrane. Its function is as follows. Plays a role in cell envelope biogenesis, maintenance of cell envelope integrity and membrane homeostasis. The polypeptide is Inner membrane-spanning protein YciB (Haemophilus influenzae (strain PittEE)).